The primary structure comprises 81 residues: Three-finger toxin A1 (81 aa).

The signal sequence occupies residues M1–T21. Intrachain disulfides connect C24/C43, C38/C60, C62/C73, and C74/C79.

It belongs to the three-finger toxin family. Short-chain subfamily. Type I alpha-neurotoxin sub-subfamily. Expressed by the venom gland.

Its subcellular location is the secreted. Functionally, binds and inhibits fetal (alpha-1-beta-1-gamma-delta/CHRNA1-CHRNB1-CHRNG-CHRND, IC(50)=1.4 nM), adult (alpha-1-beta-1-delta-epsilon/CHRNA1-CHRNB1-CHRND-CHRNE, IC(50)=12 nM) and neuronal alpha-7/CHRNA7 (IC(50)=400 nM) nicotinic acetylcholine receptors (nAChR) thereby impairing neuromuscular and neuronal transmissions. The sequence is that of Three-finger toxin A1 from Micrurus laticollaris (Balsas coral snake).